A 122-amino-acid chain; its full sequence is Large ribosomal subunit protein bL12 (122 aa).

It belongs to the bacterial ribosomal protein bL12 family. In terms of assembly, homodimer. Part of the ribosomal stalk of the 50S ribosomal subunit. Forms a multimeric L10(L12)X complex, where L10 forms an elongated spine to which 2 to 4 L12 dimers bind in a sequential fashion. Binds GTP-bound translation factors.

In terms of biological role, forms part of the ribosomal stalk which helps the ribosome interact with GTP-bound translation factors. Is thus essential for accurate translation. The chain is Large ribosomal subunit protein bL12 from Staphylococcus saprophyticus subsp. saprophyticus (strain ATCC 15305 / DSM 20229 / NCIMB 8711 / NCTC 7292 / S-41).